The primary structure comprises 453 residues: Septin-10 (453 aa).

The interval 18–43 (KTAHTSSQVSDHEQKQKDSPRSLTMS) is disordered. The span at 27–37 (SDHEQKQKDSP) shows a compositional bias: basic and acidic residues. A Septin-type G domain is found at 62–328 (QGFCFNILCV…ELYRRRKLEE (267 aa)). The G1 motif stretch occupies residues 72–79 (GETGIGKS). GTP-binding positions include 72–79 (GETGIGKS), G127, 208–216 (KADAISKTE), G262, and R277. A G3 motif region spans residues 124-127 (NTVG). The segment at 207–210 (AKAD) is G4 motif. A disordered region spans residues 433–453 (TFMTPGSNLRKDKDRKNSNFM). Positions 441–453 (LRKDKDRKNSNFM) are enriched in basic and acidic residues.

The protein belongs to the TRAFAC class TrmE-Era-EngA-EngB-Septin-like GTPase superfamily. Septin GTPase family. In terms of assembly, septins polymerize into heterooligomeric protein complexes that form filaments, and can associate with cellular membranes, actin filaments and microtubules. GTPase activity is required for filament formation. Interacts with ADGB. Post-translationally, proteolytically cleaved in vitro in a calmodulin-dependent manner.

It is found in the cytoplasm. The protein localises to the cytoskeleton. Its subcellular location is the cell projection. It localises to the cilium. The protein resides in the flagellum. In terms of biological role, filament-forming cytoskeletal GTPase. May play a role in cytokinesis (Potential). This chain is Septin-10, found in Bos taurus (Bovine).